A 111-amino-acid chain; its full sequence is Cytochrome c (111 aa).

An N-acetylserine modification is found at Ser-1. The heme c site is built by Cys-22, Cys-25, and His-26. Lys-80 is subject to N6,N6,N6-trimethyllysine. Position 88 (Met-88) interacts with heme c.

It belongs to the cytochrome c family. Binds 1 heme c group covalently per subunit.

The protein resides in the mitochondrion intermembrane space. Functionally, electron carrier protein. The oxidized form of the cytochrome c heme group can accept an electron from the heme group of the cytochrome c1 subunit of cytochrome reductase. Cytochrome c then transfers this electron to the cytochrome oxidase complex, the final protein carrier in the mitochondrial electron-transport chain. This is Cytochrome c from Ulva intestinalis (Hollow green nori).